The chain runs to 93 residues: Hematopoietic cell signal transducer (93 aa).

Positions methionine 1–alanine 18 are cleaved as a signal peptide. The Extracellular portion of the chain corresponds to glutamine 19–proline 48. A helical transmembrane segment spans residues leucine 49–phenylalanine 69. Residues leucine 70 to glycine 93 lie on the Cytoplasmic side of the membrane. Residue tyrosine 86 is modified to Phosphotyrosine. The segment at tyrosine 86–asparagine 88 is GRB2 binding site. The tract at residues tyrosine 86 to methionine 89 is PIK3R1 binding site.

It belongs to the DAP10 family. Interacts with CLEC5A. Forms an CLEC5A/TYROBP/HCST trimolecular complex depending almost solely on TYROBP. Homodimer; Disulfide-linked. Heterohexamer composed of four subunits of HCST/DAP10 and two subunits of KLRK1. Interacts (via transmembrane domain) with KLRK1 (via transmembrane domain); the interaction is required for KLRK1 NK cell surface and induces NK cell-mediated cytotoxicity. Interacts with PIK3R1 and GRB2. Interacts with CD300H. Phosphorylated; PIK3R1 and GRB2 associate specifically with tyrosine-phosphorylated HCST. In terms of processing, O-glycosylated. Predominantly expressed in hemopoietic cells such as NK cells, subset of T-cells and monocytes. Detected in leukocytes, spleen, and thymus.

The protein resides in the membrane. Transmembrane adapter protein which associates with KLRK1 to form an activation receptor KLRK1-HCST in lymphoid and myeloid cells; this receptor plays a major role in triggering cytotoxicity against target cells expressing cell surface ligands such as MHC class I chain-related MICA and MICB, and UL16-binding proteins (ULBPs); these ligands are up-regulated by stress conditions and pathological state such as viral infection and tumor transformation. Functions as a docking site for PI3-kinase PIK3R1 and GRB2. Interaction of ULBPs with KLRK1-HCST triggers calcium mobilization and activation of the PIK3R1, MAP2K/ERK, and JAK2/STAT5 signaling pathways. Both PIK3R1 and GRB2 are required for full KLRK1-HCST-mediated activation and ultimate killing of target cells. In NK cells, KLRK1-HCST signaling directly induces cytotoxicity and enhances cytokine production initiated via DAP12/TYROBP-associated receptors. In T-cells, it provides primarily costimulation for TCR-induced signals. KLRK1-HCST receptor plays a role in immune surveillance against tumors and is required for cytolysis of tumors cells; indeed, melanoma cells that do not express KLRK1 ligands escape from immune surveillance mediated by NK cells. In Homo sapiens (Human), this protein is Hematopoietic cell signal transducer (HCST).